The chain runs to 363 residues: Endopolygalacturonase 1 (363 aa).

The N-terminal stretch at 1–17 (MVSYLFVLGALASVAIA) is a signal peptide. The propeptide occupies 18–26 (SPVPELKAR). Cysteines 29 and 44 form a disulfide. PbH1 repeat units lie at residues 188–209 (STGV…AVNS), 210–230 (GTNI…SIGS), 239–260 (VKSV…RIKT), and 268–290 (VSDI…VIEQ). Asp202 (proton donor) is an active-site residue. A disulfide bond links Cys204 and Cys220. N-linked (GlcNAc...) asparagine glycosylation is present at Asn212. The active site involves His224. 2 disulfide bridges follow: Cys330/Cys333 and Cys352/Cys363.

It belongs to the glycosyl hydrolase 28 family.

It localises to the secreted. The catalysed reaction is (1,4-alpha-D-galacturonosyl)n+m + H2O = (1,4-alpha-D-galacturonosyl)n + (1,4-alpha-D-galacturonosyl)m.. Involved in maceration and soft-rotting of plant tissue. Hydrolyzes the 1,4-alpha glycosidic bonds of de-esterified pectate in the smooth region of the plant cell wall. The chain is Endopolygalacturonase 1 (PG1) from Colletotrichum lindemuthianum (Bean anthracnose fungus).